Here is a 517-residue protein sequence, read N- to C-terminus: GMP synthase [glutamine-hydrolyzing] (517 aa).

In terms of domain architecture, Glutamine amidotransferase type-1 spans 4–193 (KIIILDFGSQ…VVDICGGKQD (190 aa)). Cys79 functions as the Nucleophile in the catalytic mechanism. Catalysis depends on residues His167 and Glu169. The GMPS ATP-PPase domain occupies 194 to 382 (WSAASFIETT…LGMPEHLITR (189 aa)). 221 to 227 (SGGVDSS) serves as a coordination point for ATP.

As to quaternary structure, homodimer.

The enzyme catalyses XMP + L-glutamine + ATP + H2O = GMP + L-glutamate + AMP + diphosphate + 2 H(+). It functions in the pathway purine metabolism; GMP biosynthesis; GMP from XMP (L-Gln route): step 1/1. Catalyzes the synthesis of GMP from XMP. This Phocaeicola vulgatus (strain ATCC 8482 / DSM 1447 / JCM 5826 / CCUG 4940 / NBRC 14291 / NCTC 11154) (Bacteroides vulgatus) protein is GMP synthase [glutamine-hydrolyzing].